Consider the following 116-residue polypeptide: uncharacterized protein (116 aa).

The region spanning 6–83 (ATVHVGNLAP…RCIRVSPANF (78 aa)) is the RRM domain.

It is found in the cytoplasm. The protein resides in the nucleus. This is an uncharacterized protein from Schizosaccharomyces pombe (strain 972 / ATCC 24843) (Fission yeast).